The chain runs to 396 residues: Methylthioribose kinase (396 aa).

ATP is bound by residues Asn-44, Lys-61, and 115–117; that span reads EDL. Asp-233 lines the substrate pocket. ATP is bound at residue 250 to 252; that stretch reads DPE. Arg-340 is a binding site for substrate.

The protein belongs to the methylthioribose kinase family. Homodimer.

It catalyses the reaction 5-(methylsulfanyl)-D-ribose + ATP = 5-(methylsulfanyl)-alpha-D-ribose 1-phosphate + ADP + H(+). It functions in the pathway amino-acid biosynthesis; L-methionine biosynthesis via salvage pathway; S-methyl-5-thio-alpha-D-ribose 1-phosphate from S-methyl-5'-thioadenosine (hydrolase route): step 2/2. Catalyzes the phosphorylation of methylthioribose into methylthioribose-1-phosphate. The sequence is that of Methylthioribose kinase from Geobacillus thermodenitrificans (strain NG80-2).